The sequence spans 656 residues: Chaperone protein DnaK (656 aa).

Threonine 204 bears the Phosphothreonine; by autocatalysis mark. Positions 607 to 656 are disordered; the sequence is VYAKKGGAAGAPPGGEAEGEPQAQAGGKKEDVVDAEFEEVKDEKKKDEDK. A compositionally biased stretch (low complexity) spans 620 to 632; that stretch reads GGEAEGEPQAQAG. The span at 647–656 shows a compositional bias: basic and acidic residues; the sequence is KDEKKKDEDK.

This sequence belongs to the heat shock protein 70 family.

Acts as a chaperone. This chain is Chaperone protein DnaK, found in Coxiella burnetii (strain CbuK_Q154) (Coxiella burnetii (strain Q154)).